Consider the following 255-residue polypeptide: MAADIRVFTCLSDNFGYLIHDPATGATASVDAPEAGPIIRQLEAAGWTLTDILITHHHHDHVGAVAELKQKYGCRVVAPHDKTTAIADVDLRVGHGDVIKVGELLARVLETPGHTLDHVSYVFDADKAVFAADTLFSVGCGRVFEGTYPMMWDSLLKLRALPDDFRLYCGHEYTASNVKFALTVDGDNEALKARAAEVTRLRAANESTIPSLLGDEKQTNVFLRADDPAVAIKLRMKGATAEQVFGELRERKNKS.

7 residues coordinate Zn(2+): His56, His58, Asp60, His61, His114, Asp133, and His171.

The protein belongs to the metallo-beta-lactamase superfamily. Glyoxalase II family. Monomer. Requires Zn(2+) as cofactor.

It carries out the reaction an S-(2-hydroxyacyl)glutathione + H2O = a 2-hydroxy carboxylate + glutathione + H(+). It functions in the pathway secondary metabolite metabolism; methylglyoxal degradation; (R)-lactate from methylglyoxal: step 2/2. Functionally, thiolesterase that catalyzes the hydrolysis of S-D-lactoyl-glutathione to form glutathione and D-lactic acid. This chain is Hydroxyacylglutathione hydrolase, found in Bradyrhizobium sp. (strain BTAi1 / ATCC BAA-1182).